The primary structure comprises 157 residues: Small ribosomal subunit protein uS7 (157 aa).

This sequence belongs to the universal ribosomal protein uS7 family. In terms of assembly, part of the 30S ribosomal subunit. Contacts proteins S9 and S11.

Functionally, one of the primary rRNA binding proteins, it binds directly to 16S rRNA where it nucleates assembly of the head domain of the 30S subunit. Is located at the subunit interface close to the decoding center, probably blocks exit of the E-site tRNA. The polypeptide is Small ribosomal subunit protein uS7 (Rhodopirellula baltica (strain DSM 10527 / NCIMB 13988 / SH1)).